Consider the following 189-residue polypeptide: Translation initiation factor IF-3 (189 aa).

Belongs to the IF-3 family. Monomer.

It is found in the cytoplasm. Functionally, IF-3 binds to the 30S ribosomal subunit and shifts the equilibrium between 70S ribosomes and their 50S and 30S subunits in favor of the free subunits, thus enhancing the availability of 30S subunits on which protein synthesis initiation begins. This is Translation initiation factor IF-3 from Corynebacterium glutamicum (strain ATCC 13032 / DSM 20300 / JCM 1318 / BCRC 11384 / CCUG 27702 / LMG 3730 / NBRC 12168 / NCIMB 10025 / NRRL B-2784 / 534).